The primary structure comprises 590 residues: Nuclear receptor subfamily 2 group C member 1 (590 aa).

The segment at 1 to 166 (MATIEEIAHQ…RLQRCIAFGM (166 aa)) is required for interaction with KAT2B. The nuclear receptor DNA-binding region spans 98-173 (FDLCVVCGDK…FGMKQDSVQC (76 aa)). NR C4-type zinc fingers lie at residues 101–121 (CVVC…CEGC) and 137–156 (CRGS…CQYC). 2 positions are modified to phosphoserine: Ser-185 and Ser-203. Thr-208 carries the post-translational modification Phosphothreonine. Thr-210 bears the Phosphothreonine; by MAPK1 mark. Residue Lys-238 forms a Glycyl lysine isopeptide (Lys-Gly) (interchain with G-Cter in SUMO); alternate linkage. Residue Lys-238 forms a Glycyl lysine isopeptide (Lys-Gly) (interchain with G-Cter in SUMO2); alternate linkage. The 245-residue stretch at 333–577 (ESMEGSTHLI…SVIPHILKME (245 aa)) folds into the NR LBD domain. Ser-568 is modified (phosphoserine; by PKC). Residues 571–590 (PHILKMEPADYNSQIIGHSL) form a required for interaction with NRIP1 region. Lys-575 is covalently cross-linked (Glycyl lysine isopeptide (Lys-Gly) (interchain with G-Cter in SUMO2)).

Belongs to the nuclear hormone receptor family. NR2 subfamily. As to quaternary structure, homodimer. Heterodimer; with NR2C2 which is required for chromatin remodeling and for binding to promoter regions such as globin DR1 repeats. Interacts with ESR1; the interaction prevents homodimerization of ESR1 and suppresses its transcriptional activity and cell growth. Interacts with NRIP1 (via its LXXLL motifs); the interaction provides corepressor activity. Interacts with HDAC3 (via the DNA-binding domain); the interaction recruits phosphorylated NR2C1 to PML bodies for sumoylation. Interacts with HDAC4 (via the DNA-binding domain). Interacts with PIAS1; the interaction is required for sumoylation of NR2C1. Interacts with UBE2I; the interaction is required for sumoylation of NR2C1. Interacts with KAT2B; the interaction acts as a corepressor of gene expression. In terms of processing, sumoylation requires both PIAS1 and UBE2I. Sumoylation appears to dissociate NR2C1 from the PML nuclear bodies. Enhances the interaction with NRIP1 but inhibits interaction with KAT2B. In proliferating cells, stimulation by all-trans retinoic acid, activation of MAPK1-mediated phosphorylation and recruitment to PML bodies with subsequent sumoylation, suppresses OCT4 expression. Post-translationally, phosphorylated on several serine and threonine residues. Phosphorylation on Thr-210, stimulated by all-trans retinoic acid (atRA) mediates PML location and sumoylation in proliferating cells which then modulates its association with effector molecules, KAT2B and NRIP1. Phosphorylation on Ser-568 by PKC is important for protein stability and function as activator of RARB.

It localises to the nucleus. Its subcellular location is the PML body. Orphan nuclear receptor. Binds the IR7 element in the promoter of its own gene in an autoregulatory negative feedback mechanism. Primarily repressor of a broad range of genes including ESR1 and RARB. Together with NR2C2, forms the core of the DRED (direct repeat erythroid-definitive) complex that represses embryonic and fetal globin transcription. Binds to hormone response elements (HREs) consisting of two 5'-AGGTCA-3' half site direct repeat consensus sequences. Also activator of OCT4 gene expression. Plays a fundamental role in early embryogenesis and regulates embryonic stem cell proliferation and differentiation. Mediator of retinoic acid-regulated preadipocyte proliferation. The protein is Nuclear receptor subfamily 2 group C member 1 (Nr2c1) of Rattus norvegicus (Rat).